We begin with the raw amino-acid sequence, 400 residues long: Elongation factor Tu (400 aa).

The 200-residue stretch at 10 to 209 (KPHVNVGTIG…AVDSYIPTPE (200 aa)) folds into the tr-type G domain. A G1 region spans residues 19-26 (GHVDHGKT). Residue 19 to 26 (GHVDHGKT) participates in GTP binding. Threonine 26 contributes to the Mg(2+) binding site. A G2 region spans residues 60 to 64 (GITIA). A G3 region spans residues 81 to 84 (DCPG). Residues 81–85 (DCPGH) and 136–139 (NKVD) contribute to the GTP site. The segment at 136-139 (NKVD) is G4. The G5 stretch occupies residues 174-176 (SAL).

It belongs to the TRAFAC class translation factor GTPase superfamily. Classic translation factor GTPase family. EF-Tu/EF-1A subfamily. As to quaternary structure, monomer.

It localises to the cytoplasm. It catalyses the reaction GTP + H2O = GDP + phosphate + H(+). In terms of biological role, GTP hydrolase that promotes the GTP-dependent binding of aminoacyl-tRNA to the A-site of ribosomes during protein biosynthesis. This chain is Elongation factor Tu, found in Moorella thermoacetica (strain ATCC 39073 / JCM 9320).